We begin with the raw amino-acid sequence, 170 residues long: Acireductone dioxygenase (170 aa).

Fe(2+)-binding residues include H99, H101, E105, and H144. Positions 99, 101, 105, and 144 each coordinate Ni(2+).

This sequence belongs to the acireductone dioxygenase (ARD) family. In terms of assembly, monomer. Fe(2+) is required as a cofactor. Requires Ni(2+) as cofactor.

The enzyme catalyses 1,2-dihydroxy-5-(methylsulfanyl)pent-1-en-3-one + O2 = 3-(methylsulfanyl)propanoate + CO + formate + 2 H(+). The catalysed reaction is 1,2-dihydroxy-5-(methylsulfanyl)pent-1-en-3-one + O2 = 4-methylsulfanyl-2-oxobutanoate + formate + 2 H(+). It participates in amino-acid biosynthesis; L-methionine biosynthesis via salvage pathway; L-methionine from S-methyl-5-thio-alpha-D-ribose 1-phosphate: step 5/6. In terms of biological role, catalyzes 2 different reactions between oxygen and the acireductone 1,2-dihydroxy-3-keto-5-methylthiopentene (DHK-MTPene) depending upon the metal bound in the active site. Fe-containing acireductone dioxygenase (Fe-ARD) produces formate and 2-keto-4-methylthiobutyrate (KMTB), the alpha-ketoacid precursor of methionine in the methionine recycle pathway. Ni-containing acireductone dioxygenase (Ni-ARD) produces methylthiopropionate, carbon monoxide and formate, and does not lie on the methionine recycle pathway. This Bacillus cereus (strain ATCC 10987 / NRS 248) protein is Acireductone dioxygenase.